The following is a 430-amino-acid chain: Asparagine--tRNA ligase (430 aa).

This sequence belongs to the class-II aminoacyl-tRNA synthetase family. In terms of assembly, homodimer.

It is found in the cytoplasm. The catalysed reaction is tRNA(Asn) + L-asparagine + ATP = L-asparaginyl-tRNA(Asn) + AMP + diphosphate + H(+). The sequence is that of Asparagine--tRNA ligase from Bacillus licheniformis (strain ATCC 14580 / DSM 13 / JCM 2505 / CCUG 7422 / NBRC 12200 / NCIMB 9375 / NCTC 10341 / NRRL NRS-1264 / Gibson 46).